We begin with the raw amino-acid sequence, 117 residues long: Minor capsid protein p17 (117 aa).

N-linked (GlcNAc...) asparagine; by host glycosylation occurs at asparagine 12. A helical membrane pass occupies residues 39-59 (AIILGILILLVIILIVVAIVY). N-linked (GlcNAc...) asparagine; by host glycosylation is found at asparagine 61 and asparagine 98. Positions 97 to 117 (KNSTTQQHIPSDEQLAELAHS) are disordered.

It belongs to the asfivirus minor capsid protein p17 family. As to quaternary structure, interacts with the minor capsid protein M1249L and with the hexon capsid protein p72 capsomers; these interactions form a rigid zipper structure that stabilizes the capsomers. Interacts with host STING1.

The protein resides in the virion membrane. Its subcellular location is the host endoplasmic reticulum membrane. Together with the penton and the other minor capsid proteins (M1249L, p49), forms a complicated network immediately below the outer capsid shell, stabilizing the whole capsid. Three copies of p17 encircle each p72 capsomer in the inner capsid shell, anchoring p72 capsomers on the inner membrane. Required for the assembly of the capsid and icosahedral morphogenesis. Additionally, inhibits the host cGAS-STING pathway through its interaction with STING1 and subsequent interference of the recruitment of downstream components TBK1 and IKBKE. The polypeptide is Minor capsid protein p17 (Ornithodoros (relapsing fever ticks)).